The sequence spans 414 residues: Phosphoglycerate kinase (414 aa).

9 residues coordinate (2R)-3-phosphoglycerate: valine 23, aspartate 24, phenylalanine 25, asparagine 26, arginine 39, serine 62, histidine 63, glycine 65, and arginine 66. Tyrosine 75 is modified (phosphotyrosine). A Phosphoserine modification is found at serine 76. The (2R)-3-phosphoglycerate site is built by leucine 121 and arginine 122. Serine 143 carries the phosphoserine modification. Residues histidine 168 and arginine 169 each coordinate (2R)-3-phosphoglycerate. Phosphoserine is present on residues serine 172, serine 173, and serine 183. Position 211 (glycine 211) interacts with ADP. A CDP-binding site is contributed by glycine 211. AMP contacts are provided by alanine 212 and lysine 213. Alanine 212 lines the ATP pocket. Alanine 212 is a binding site for Mg(2+). Residues alanine 215 and aspartate 216 each contribute to the Mg(2+) site. Aspartate 216 provides a ligand contact to CDP. Lysine 217 lines the AMP pocket. Lysine 217 contributes to the ATP binding site. Residue glycine 235 coordinates ADP. Glycine 235 lines the CDP pocket. Glycine 236 is a binding site for AMP. Residue glycine 236 coordinates ATP. Phosphoserine is present on residues serine 253 and serine 260. A Phosphothreonine modification is found at threonine 299. Glycine 310 is a binding site for AMP. Residue glycine 310 participates in ATP binding. Serine 328 is subject to Phosphoserine. Residues glycine 335, alanine 337, and phenylalanine 340 each contribute to the CDP site. Position 340 (phenylalanine 340) interacts with ADP. Glutamate 341 provides a ligand contact to AMP. Glutamate 341 lines the ATP pocket. A Phosphoserine modification is found at serine 351. Positions 372 and 373 each coordinate ATP. Aspartate 372 contacts Mg(2+). The residue at position 373 (threonine 373) is a Phosphothreonine. 4 positions are modified to phosphoserine: serine 387, serine 390, serine 412, and serine 413.

Belongs to the phosphoglycerate kinase family. As to quaternary structure, monomer. It depends on Mg(2+) as a cofactor.

The protein localises to the cytoplasm. The protein resides in the mitochondrion. The catalysed reaction is (2R)-3-phosphoglycerate + ATP = (2R)-3-phospho-glyceroyl phosphate + ADP. The protein operates within carbohydrate degradation; glycolysis; pyruvate from D-glyceraldehyde 3-phosphate: step 2/5. Its function is as follows. Catalyzes one of the two ATP producing reactions in the glycolytic pathway via the reversible conversion of 1,3-diphosphoglycerate to 3-phosphoglycerate. Both L- and D- forms of purine and pyrimidine nucleotides can be used as substrates, but the activity is much lower on pyrimidines. Negatively regulates the biosynthesis of acetyl-CoA from pyruvate in the mitochondrion. The polypeptide is Phosphoglycerate kinase (pgk1) (Schizosaccharomyces pombe (strain 972 / ATCC 24843) (Fission yeast)).